We begin with the raw amino-acid sequence, 79 residues long: MNNVEKKIKKIISKILNIKVEKILNNASFLDDLSADSLDIVELIMAIEEEFDIEISDEDAEKLNTVQKSIDYINNKNKK.

Positions 1–77 constitute a Carrier domain; sequence MNNVEKKIKK…KSIDYINNKN (77 aa). Serine 37 carries the O-(pantetheine 4'-phosphoryl)serine modification.

Belongs to the acyl carrier protein (ACP) family. Post-translationally, 4'-phosphopantetheine is transferred from CoA to a specific serine of apo-ACP by AcpS. This modification is essential for activity because fatty acids are bound in thioester linkage to the sulfhydryl of the prosthetic group.

It localises to the cytoplasm. It participates in lipid metabolism; fatty acid biosynthesis. In terms of biological role, carrier of the growing fatty acid chain in fatty acid biosynthesis. The protein is Acyl carrier protein of Buchnera aphidicola subsp. Schizaphis graminum (strain Sg).